The following is a 234-amino-acid chain: Nuclear transcription factor Y subunit B-6 (234 aa).

Disordered stretches follow at residues 1–21 (MERGGFHGYRKLSVNNTTPSP) and 35–55 (MRPPEFNQPNKTSNGGEEECT). The DNA-binding element occupies 63–69 (MPIANVI). The tract at residues 90 to 101 (IQECVSEYISFI) is subunit association domain (SAD). The segment at 206–234 (NEPNSKMSGSSSGASGARVEVFPTQQHKY) is disordered. The span at 213–222 (SGSSSGASGA) shows a compositional bias: low complexity.

Belongs to the NFYB/HAP3 subunit family. As to quaternary structure, heterotrimeric transcription factor composed of three components, NF-YA, NF-YB and NF-YC. NF-YB and NF-YC must interact and dimerize for NF-YA association and DNA binding. Interacts with PRN1. Binds directly with DPB3-1. As to expression, expressed in roots, flowers and developing siliques. Present in etiolated seedlings.

It localises to the nucleus. Component of the NF-Y/HAP transcription factor complex. The NF-Y complex stimulates the transcription of various genes by recognizing and binding to a CCAAT motif in promoters. Plays a role in the regulation of the embryogenesis. Involved in the abscisic acid (ABA) signaling pathway. This Arabidopsis thaliana (Mouse-ear cress) protein is Nuclear transcription factor Y subunit B-6.